The sequence spans 278 residues: 3-methyl-2-oxobutanoate hydroxymethyltransferase (278 aa).

Mg(2+) is bound by residues Asp-43 and Asp-82. Residues 43–44 (DS), Asp-82, and Lys-112 each bind 3-methyl-2-oxobutanoate. Glu-114 contacts Mg(2+). Glu-181 functions as the Proton acceptor in the catalytic mechanism.

The protein belongs to the PanB family. In terms of assembly, homodecamer; pentamer of dimers. Mg(2+) serves as cofactor.

The protein resides in the cytoplasm. The enzyme catalyses 3-methyl-2-oxobutanoate + (6R)-5,10-methylene-5,6,7,8-tetrahydrofolate + H2O = 2-dehydropantoate + (6S)-5,6,7,8-tetrahydrofolate. The protein operates within cofactor biosynthesis; (R)-pantothenate biosynthesis; (R)-pantoate from 3-methyl-2-oxobutanoate: step 1/2. In terms of biological role, catalyzes the reversible reaction in which hydroxymethyl group from 5,10-methylenetetrahydrofolate is transferred onto alpha-ketoisovalerate to form ketopantoate. The sequence is that of 3-methyl-2-oxobutanoate hydroxymethyltransferase from Bacillus cereus (strain ATCC 14579 / DSM 31 / CCUG 7414 / JCM 2152 / NBRC 15305 / NCIMB 9373 / NCTC 2599 / NRRL B-3711).